We begin with the raw amino-acid sequence, 328 residues long: uncharacterized protein (328 aa).

This is an uncharacterized protein from Bacillus anthracis.